The sequence spans 424 residues: Histidine--tRNA ligase (424 aa).

This sequence belongs to the class-II aminoacyl-tRNA synthetase family. As to quaternary structure, homodimer.

The protein localises to the cytoplasm. It catalyses the reaction tRNA(His) + L-histidine + ATP = L-histidyl-tRNA(His) + AMP + diphosphate + H(+). The protein is Histidine--tRNA ligase of Salmonella heidelberg (strain SL476).